Here is a 68-residue protein sequence, read N- to C-terminus: UPF0434 protein BURPS668_0926 (68 aa).

The protein belongs to the UPF0434 family.

The polypeptide is UPF0434 protein BURPS668_0926 (Burkholderia pseudomallei (strain 668)).